The sequence spans 389 residues: Chalcone synthase 2 (389 aa).

C164 is an active-site residue.

Belongs to the thiolase-like superfamily. Chalcone/stilbene synthases family.

The catalysed reaction is (E)-4-coumaroyl-CoA + 3 malonyl-CoA + 3 H(+) = 2',4,4',6'-tetrahydroxychalcone + 3 CO2 + 4 CoA. Its pathway is secondary metabolite biosynthesis; flavonoid biosynthesis. The primary product of this enzyme is 4,2',4',6'-tetrahydroxychalcone (also termed naringenin-chalcone or chalcone) which can under specific conditions spontaneously isomerize into naringenin. In Trifolium subterraneum (Subterranean clover), this protein is Chalcone synthase 2 (CHS2).